Consider the following 220-residue polypeptide: Metalloproteinase inhibitor 2 (220 aa).

An N-terminal signal peptide occupies residues 1-26 (MPGAALPSLLAWLAVLLLGRARPADA). Cys-27 lines the Zn(2+) pocket. Involved in metalloproteinase-binding regions lie at residues 27 to 30 (CSCS) and 95 to 96 (TE). Disulfide bonds link Cys-27-Cys-98, Cys-29-Cys-127, Cys-39-Cys-152, Cys-154-Cys-201, Cys-159-Cys-164, and Cys-172-Cys-193. The NTR domain occupies 27 to 152 (CSCSPIHPQQ…SLNQRYQMGC (126 aa)).

Belongs to the protease inhibitor I35 (TIMP) family. In terms of processing, the activity of TIMP2 is dependent on the presence of disulfide bonds.

Its subcellular location is the secreted. Its function is as follows. Complexes with metalloproteinases (such as collagenases) and irreversibly inactivates them by binding to their catalytic zinc cofactor. This chain is Metalloproteinase inhibitor 2 (TIMP2), found in Gallus gallus (Chicken).